The primary structure comprises 511 residues: Exodeoxyribonuclease 7 large subunit (511 aa).

The protein belongs to the XseA family. Heterooligomer composed of large and small subunits.

The protein localises to the cytoplasm. The catalysed reaction is Exonucleolytic cleavage in either 5'- to 3'- or 3'- to 5'-direction to yield nucleoside 5'-phosphates.. Bidirectionally degrades single-stranded DNA into large acid-insoluble oligonucleotides, which are then degraded further into small acid-soluble oligonucleotides. The protein is Exodeoxyribonuclease 7 large subunit of Brucella melitensis biotype 1 (strain ATCC 23456 / CCUG 17765 / NCTC 10094 / 16M).